The chain runs to 473 residues: H(+)/Cl(-) exchange transporter ClcA (473 aa).

The Cytoplasmic portion of the chain corresponds to 1-32 (MKTDTPSLETPQAARLRRRQLIRQLLERDKTP). A helical membrane pass occupies residues 33-69 (LAILFMAAVVGTLVGLAAVAFDKGVAWLQNQRMGALV). Topologically, residues 70 to 76 (HTADNYP) are periplasmic. The chain crosses the membrane as a helical span at residues 77–100 (LLLTVAFLCSAVLAMFGYFLVRKY). Residues 106 to 110 (GSGIP) carry the Selectivity filter part_1 motif. Ser107 provides a ligand contact to chloride. Residues 109–116 (IPEIEGAL) constitute an intramembrane region (helical). The Cytoplasmic segment spans residues 117 to 123 (EDQRPVR). The next 2 helical transmembrane spans lie at 124–141 (WWRV…TLGG) and 148–166 (EGPT…LDVF). The short motif at 146 to 150 (GREGP) is the Selectivity filter part_2 element. The Cytoplasmic portion of the chain corresponds to 167–176 (RLKGDEARHT). 2 intramembrane regions (helical) span residues 177–189 (LLAT…LAAA) and 193–201 (PLAGILFII). The Cytoplasmic segment spans residues 202–214 (EEMRPQFRYTLIS). The helical transmembrane segment at 215-232 (IKAVFIGVIMSTIMYRIF) threads the bilayer. Topologically, residues 233 to 252 (NHEVALIDVGKLSDAPLNTL) are periplasmic. Residues 253-281 (WLYLILGIIFGIFGPIFNKWVLGMQDLLH) traverse the membrane as a helical segment. Residues 282–287 (RVHGGN) lie on the Cytoplasmic side of the membrane. The helical transmembrane segment at 288 to 309 (ITKWVLMGGAIGGLCGLLGFVA) threads the bilayer. Residues 310–329 (PATSGGGFNLIPIATAGNFS) lie on the Periplasmic side of the membrane. 2 helical membrane-spanning segments follow: residues 330-349 (MGML…LCFS) and 355-376 (GIFA…MVAV). Residues 355–359 (GIFAP) carry the Selectivity filter part_3 motif. Ile356 and Phe357 together coordinate chloride. At 377–386 (ELFPQYHLEA) the chain is on the periplasmic side. The segment at residues 387–401 (GTFAIAGMGALLAAS) is an intramembrane region (helical). An intramembrane region (note=Loop between two helices) is located at residues 402–404 (IRA). The helical intramembrane region spans 405-416 (PLTGIILVLEMT). The note=Loop between two helices intramembrane region spans 417–421 (DNYQL). A helical transmembrane segment spans residues 422 to 438 (ILPMIITGLGATLLAQF). The Cytoplasmic portion of the chain corresponds to 439 to 473 (TGGKPLYSAILARTLAKQEAEQLARSKAASASENT). Tyr445 lines the chloride pocket.

It belongs to the chloride channel (TC 2.A.49) family. ClcA subfamily. As to quaternary structure, homodimer.

It is found in the cell inner membrane. It catalyses the reaction 2 chloride(in) + H(+)(out) = 2 chloride(out) + H(+)(in). Its function is as follows. Proton-coupled chloride transporter. Functions as antiport system and exchanges two chloride ions for 1 proton. Probably acts as an electrical shunt for an outwardly-directed proton pump that is linked to amino acid decarboxylation, as part of the extreme acid resistance (XAR) response. The protein is H(+)/Cl(-) exchange transporter ClcA of Escherichia coli O157:H7.